We begin with the raw amino-acid sequence, 403 residues long: Probable tRNA sulfurtransferase (403 aa).

One can recognise a THUMP domain in the interval 61–166; that stretch reads EAIAESLKDV…SGYSYIMCDE (106 aa). ATP is bound by residues 184-185, 209-210, arginine 266, glycine 288, and glutamine 297; these read LL and HF.

This sequence belongs to the ThiI family.

The protein resides in the cytoplasm. The enzyme catalyses [ThiI sulfur-carrier protein]-S-sulfanyl-L-cysteine + a uridine in tRNA + 2 reduced [2Fe-2S]-[ferredoxin] + ATP + H(+) = [ThiI sulfur-carrier protein]-L-cysteine + a 4-thiouridine in tRNA + 2 oxidized [2Fe-2S]-[ferredoxin] + AMP + diphosphate. The catalysed reaction is [ThiS sulfur-carrier protein]-C-terminal Gly-Gly-AMP + S-sulfanyl-L-cysteinyl-[cysteine desulfurase] + AH2 = [ThiS sulfur-carrier protein]-C-terminal-Gly-aminoethanethioate + L-cysteinyl-[cysteine desulfurase] + A + AMP + 2 H(+). It functions in the pathway cofactor biosynthesis; thiamine diphosphate biosynthesis. Its function is as follows. Catalyzes the ATP-dependent transfer of a sulfur to tRNA to produce 4-thiouridine in position 8 of tRNAs, which functions as a near-UV photosensor. Also catalyzes the transfer of sulfur to the sulfur carrier protein ThiS, forming ThiS-thiocarboxylate. This is a step in the synthesis of thiazole, in the thiamine biosynthesis pathway. The sulfur is donated as persulfide by IscS. The polypeptide is Probable tRNA sulfurtransferase (Bacillus cytotoxicus (strain DSM 22905 / CIP 110041 / 391-98 / NVH 391-98)).